The chain runs to 380 residues: Pregnancy-associated glycoprotein 6 (380 aa).

An N-terminal signal peptide occupies residues 1 to 15; it reads MKWLVLLGLVSISEC. A propeptide spans 16–53 (activation peptide); that stretch reads IVKIPLRRVKTMRKTLSEKNMLNNFLKEHAYRLSQISF. N-linked (GlcNAc...) asparagine glycans are attached at residues Asn57 and Asn74. Residues 71–377 enclose the Peptidase A1 domain; sequence YLGNITIGTP…DRGHDRIGLA (307 aa). Residue Asp89 is part of the active site. Cys102 and Cys107 are joined by a disulfide. N-linked (GlcNAc...) asparagine glycosylation occurs at Asn125. Cys261 and Cys265 are oxidised to a cystine. Residue Asp270 is part of the active site. An intrachain disulfide couples Cys303 to Cys337.

Belongs to the peptidase A1 family. In terms of tissue distribution, trophoblast and placental tissue. Produced specifically in the invasive binucleate cells of the placenta.

Its subcellular location is the secreted. The protein localises to the extracellular space. This is Pregnancy-associated glycoprotein 6 from Ovis aries (Sheep).